Reading from the N-terminus, the 329-residue chain is Probable alpha-1,2-galactosyltransferase gmh1 (329 aa).

The Cytoplasmic segment spans residues 1-14 (MLSFFTKNTLTKRK). Residues 15–35 (LIMLALAIVFTFFAFGLYFIP) form a helical; Signal-anchor for type II membrane protein membrane-spanning segment. Residues 36 to 329 (HDEISVFDFK…LWTKYKDKII (294 aa)) are Lumenal-facing. Asparagine 127 and asparagine 169 each carry an N-linked (GlcNAc...) asparagine glycan.

This sequence belongs to the glycosyltransferase 34 family.

The protein localises to the golgi apparatus membrane. This is Probable alpha-1,2-galactosyltransferase gmh1 (gmh1) from Schizosaccharomyces pombe (strain 972 / ATCC 24843) (Fission yeast).